A 265-amino-acid chain; its full sequence is Apolipoprotein A-I (265 aa).

The signal sequence occupies residues 1–18; sequence MKAVVLAVAALFLAGGEA. 2 tandem repeats follow at residues 68 to 89 and 90 to 111. The 10 X approximate tandem repeats stretch occupies residues 68–265; it reads LKLTENLDTL…EEASKKLSSQ (198 aa). M110 bears the Methionine sulfoxide mark. One copy of the 3; half-length repeat lies at 112-122; it reads KDLADMKQKVQ. A run of 3 repeats spans residues 123-144, 145-166, and 167-188. One copy of the 7; truncated repeat lies at 189–208; it reads PYSEQMRERLAERLAALRDS. M194 carries the methionine sulfoxide modification. Repeat unit 8 spans residues 209-230; sequence PSLAEYQAKAHEHLKTLHEKAQ. The 9; half-length repeat unit spans residues 231-241; that stretch reads PALSDLGQGVL. Residues 242–265 form repeat 10; it reads PVLESLKATLVGAIEEASKKLSSQ.

This sequence belongs to the apolipoprotein A1/A4/E family. As to quaternary structure, homodimer. Interacts with APOA1BP and CLU. Component of a sperm activating protein complex (SPAP), consisting of APOA1, an immunoglobulin heavy chain, an immunoglobulin light chain and albumin. Interacts with NDRG1. Interacts with SCGB3A2. Interacts with NAXE and YJEFN3. Glycosylated. In terms of processing, palmitoylated. Post-translationally, phosphorylation sites are present in the extracellular medium.

The protein localises to the secreted. In terms of biological role, participates in the reverse transport of cholesterol from tissues to the liver for excretion by promoting cholesterol efflux from tissues and by acting as a cofactor for the lecithin cholesterol acyltransferase (LCAT). As part of the SPAP complex, activates spermatozoa motility. The polypeptide is Apolipoprotein A-I (Apoa1) (Dipodomys ordii (Ord's kangaroo rat)).